A 783-amino-acid chain; its full sequence is LPS-assembly protein LptD (783 aa).

The N-terminal stretch at 1–24 is a signal peptide; the sequence is MKKNYYSLISFSIFTALYSTAGFA.

The protein belongs to the LptD family. Component of the lipopolysaccharide transport and assembly complex. Interacts with LptE and LptA.

Its subcellular location is the cell outer membrane. Its function is as follows. Together with LptE, is involved in the assembly of lipopolysaccharide (LPS) at the surface of the outer membrane. The sequence is that of LPS-assembly protein LptD from Mannheimia succiniciproducens (strain KCTC 0769BP / MBEL55E).